A 327-amino-acid chain; its full sequence is Methionyl-tRNA formyltransferase (327 aa).

121 to 124 (SLLP) provides a ligand contact to (6S)-5,6,7,8-tetrahydrofolate.

This sequence belongs to the Fmt family.

The enzyme catalyses L-methionyl-tRNA(fMet) + (6R)-10-formyltetrahydrofolate = N-formyl-L-methionyl-tRNA(fMet) + (6S)-5,6,7,8-tetrahydrofolate + H(+). In terms of biological role, attaches a formyl group to the free amino group of methionyl-tRNA(fMet). The formyl group appears to play a dual role in the initiator identity of N-formylmethionyl-tRNA by promoting its recognition by IF2 and preventing the misappropriation of this tRNA by the elongation apparatus. In Burkholderia pseudomallei (strain 668), this protein is Methionyl-tRNA formyltransferase.